The sequence spans 164 residues: Putative 4-hydroxy-4-methyl-2-oxoglutarate aldolase (164 aa).

Substrate-binding positions include 80 to 83 (GGNL) and Arg-102. Asp-103 provides a ligand contact to a divalent metal cation.

This sequence belongs to the class II aldolase/RraA-like family. In terms of assembly, homotrimer. It depends on a divalent metal cation as a cofactor.

The catalysed reaction is 4-hydroxy-4-methyl-2-oxoglutarate = 2 pyruvate. It catalyses the reaction oxaloacetate + H(+) = pyruvate + CO2. Functionally, catalyzes the aldol cleavage of 4-hydroxy-4-methyl-2-oxoglutarate (HMG) into 2 molecules of pyruvate. Also contains a secondary oxaloacetate (OAA) decarboxylase activity due to the common pyruvate enolate transition state formed following C-C bond cleavage in the retro-aldol and decarboxylation reactions. This Paraburkholderia phytofirmans (strain DSM 17436 / LMG 22146 / PsJN) (Burkholderia phytofirmans) protein is Putative 4-hydroxy-4-methyl-2-oxoglutarate aldolase.